A 130-amino-acid polypeptide reads, in one-letter code: Small ribosomal subunit protein uS8 (130 aa).

This sequence belongs to the universal ribosomal protein uS8 family. In terms of assembly, part of the 30S ribosomal subunit.

One of the primary rRNA binding proteins, it binds directly to 16S rRNA central domain where it helps coordinate assembly of the platform of the 30S subunit. This Pyrococcus abyssi (strain GE5 / Orsay) protein is Small ribosomal subunit protein uS8.